The chain runs to 155 residues: MHLIYIVMAATATTLHASSSAILDPSDVKIMTKNVESRIGNDAAFAAGRFLRGAYEDVHREEERMFGLKQNQHSFIKPSQAQDAAAIDALNIAKEALESTRNTKDHPHATATAGDQSLNPLIAAYPLRASPNAGVPQQHLGVALGSVHPHTSRST.

Residues 1 to 17 form the signal peptide; sequence MHLIYIVMAATATTLHA. Positions 49–64 match the RxLR-dEER motif; sequence RFLRGAYEDVHREEER.

Belongs to the RxLR effector family.

It localises to the secreted. It is found in the host nucleus. The protein resides in the host cytoplasm. Secreted effector that completely suppresses the host cell death induced by cell death-inducing proteins. The chain is Secreted RxLR effector protein 38 from Plasmopara viticola (Downy mildew of grapevine).